The primary structure comprises 113 residues: Single-stranded DNA-binding protein B (113 aa).

An SSB domain is found at 1-104 (MFNQVMLVGR…VLADTVRFMD (104 aa)). Y82 is modified (phosphotyrosine).

As to quaternary structure, homotetramer. Phosphorylated by YwqD, which increases ssDNA affinity; dephosphorylated by YwqE.

It localises to the cytoplasm. Functionally, not essential for replication of the chromosome, but is required for optimal competence. Binds ssDNA, binding is facilitated by DprA, acts as an accessory factor for homologous DNA strand exchange. The chain is Single-stranded DNA-binding protein B (ssbB) from Bacillus subtilis (strain 168).